The sequence spans 89 residues: Small ribosomal subunit protein uS15 (89 aa).

A disordered region spans residues 1–23; it reads MSLDTTEKQQLINANQTHGTDTG. Polar residues predominate over residues 8–23; it reads KQQLINANQTHGTDTG.

This sequence belongs to the universal ribosomal protein uS15 family. As to quaternary structure, part of the 30S ribosomal subunit. Forms a bridge to the 50S subunit in the 70S ribosome, contacting the 23S rRNA.

Its function is as follows. One of the primary rRNA binding proteins, it binds directly to 16S rRNA where it helps nucleate assembly of the platform of the 30S subunit by binding and bridging several RNA helices of the 16S rRNA. In terms of biological role, forms an intersubunit bridge (bridge B4) with the 23S rRNA of the 50S subunit in the ribosome. This chain is Small ribosomal subunit protein uS15, found in Prochlorococcus marinus (strain MIT 9313).